The chain runs to 276 residues: Diaminopimelate epimerase (276 aa).

3 residues coordinate substrate: asparagine 13, glutamine 46, and asparagine 66. Cysteine 75 functions as the Proton donor in the catalytic mechanism. Residues 76–77 (GN), asparagine 159, asparagine 192, and 210–211 (ER) each bind substrate. Cysteine 219 functions as the Proton acceptor in the catalytic mechanism. 220–221 (GS) serves as a coordination point for substrate.

Belongs to the diaminopimelate epimerase family. As to quaternary structure, homodimer.

The protein resides in the cytoplasm. The catalysed reaction is (2S,6S)-2,6-diaminopimelate = meso-2,6-diaminopimelate. It functions in the pathway amino-acid biosynthesis; L-lysine biosynthesis via DAP pathway; DL-2,6-diaminopimelate from LL-2,6-diaminopimelate: step 1/1. Functionally, catalyzes the stereoinversion of LL-2,6-diaminopimelate (L,L-DAP) to meso-diaminopimelate (meso-DAP), a precursor of L-lysine and an essential component of the bacterial peptidoglycan. The chain is Diaminopimelate epimerase from Vibrio vulnificus (strain CMCP6).